A 211-amino-acid chain; its full sequence is Dof zinc finger protein 5 (211 aa).

The interval 37-101 is disordered; that stretch reads FVVAREKVEP…QRRLQDSAEA (65 aa). Over residues 68–80 the composition is skewed to basic and acidic residues; the sequence is IKREAADRDEEQR. Residues 109–163 form a Dof-type zinc finger; the sequence is LPCPRCRSRDTKFCYFNNYNVNQPRHFCKACHRYWTAGGALRNVPVGAGRRKNRP. Residues Cys-111, Cys-114, Cys-136, and Cys-139 each coordinate Zn(2+). Residues 191–211 are disordered; that stretch reads SPTSPSPVYTDRWPVTPDRPF.

It localises to the nucleus. In terms of biological role, transcription factor that may transactivate seed storage protein genes in developing seeds. In Oryza sativa subsp. japonica (Rice), this protein is Dof zinc finger protein 5.